The chain runs to 108 residues: Long neurotoxin 13 (108 aa).

Positions 1–21 (MKTLLLTLVVVTIVCLDLAYT) are cleaved as a signal peptide. 5 disulfide bridges follow: cysteine 24/cysteine 42, cysteine 35/cysteine 63, cysteine 48/cysteine 52, cysteine 67/cysteine 78, and cysteine 79/cysteine 84.

The protein belongs to the three-finger toxin family. Long-chain subfamily. Type II alpha-neurotoxin sub-subfamily. As to expression, expressed by the venom gland.

It localises to the secreted. In terms of biological role, binds with high affinity to muscular (alpha-1/CHRNA1) and neuronal (alpha-7/CHRNA7) nicotinic acetylcholine receptor (nAChR) and inhibits acetylcholine from binding to the receptor, thereby impairing neuromuscular and neuronal transmission. This Drysdalia coronoides (White-lipped snake) protein is Long neurotoxin 13.